The primary structure comprises 205 residues: Pre-rRNA-processing protein TSR2 (205 aa).

Residues 144-205 form a disordered region; that stretch reads SKRVVHIEGD…LVQPKGRRKH (62 aa). Residues 152 to 177 show a composition bias toward acidic residues; the sequence is GDDDEDDEDVEDYDDEDEDEEMDEVV.

The protein belongs to the TSR2 family. As to quaternary structure, interacts with RPS26A.

Its subcellular location is the cytoplasm. The protein resides in the nucleus. In terms of biological role, required for 20S pre-rRNA processing. The polypeptide is Pre-rRNA-processing protein TSR2 (Saccharomyces cerevisiae (strain ATCC 204508 / S288c) (Baker's yeast)).